Here is a 76-residue protein sequence, read N- to C-terminus: RNA-binding protein KhpA (76 aa).

The region spanning 29 to 76 (QNIIELRVSPKDVGKVIGKNGRIAKSLRAILTAASVKAGKNFSLEIID) is the KH domain.

It belongs to the KhpA RNA-binding protein family. As to quaternary structure, forms a complex with KhpB.

Its subcellular location is the cytoplasm. Functionally, a probable RNA chaperone. Forms a complex with KhpB which binds to cellular RNA and controls its expression. Plays a role in peptidoglycan (PG) homeostasis and cell length regulation. This is RNA-binding protein KhpA from Leptospira interrogans serogroup Icterohaemorrhagiae serovar copenhageni (strain Fiocruz L1-130).